Reading from the N-terminus, the 136-residue chain is Large ribosomal subunit protein uL16 (136 aa).

The protein belongs to the universal ribosomal protein uL16 family. As to quaternary structure, part of the 50S ribosomal subunit.

Functionally, binds 23S rRNA and is also seen to make contacts with the A and possibly P site tRNAs. This is Large ribosomal subunit protein uL16 from Bradyrhizobium diazoefficiens (strain JCM 10833 / BCRC 13528 / IAM 13628 / NBRC 14792 / USDA 110).